The sequence spans 297 residues: CASP-like protein 4A2 (297 aa).

Residues 1–20 (MKMKRTASSNSEAQSYNESP) show a composition bias toward polar residues. Residues 1 to 135 (MKMKRTASSN…PINGEESTRT (135 aa)) are disordered. Over 1–149 (MKMKRTASSN…ARGDDLVSLT (149 aa)) the chain is Cytoplasmic. Residues 69–83 (LPSPIPPPPPQFPPP) are compositionally biased toward pro residues. Residues 150-170 (ALGFRITEVILCVISFSIMAA) traverse the membrane as a helical segment. At 171–191 (DKTQGWSGDSYDRYKEYRYCL) the chain is on the extracellular side. A helical membrane pass occupies residues 192-212 (AVNVIAFVYSAFEACDAACYI). The Cytoplasmic portion of the chain corresponds to 213–225 (AKESYMINCGFHD). Residues 226–246 (LFVFSMDQLLAYLLMSASSCA) traverse the membrane as a helical segment. Residues 247–265 (ATRVDDWVSNWGKDEFTQM) are Extracellular-facing. The helical transmembrane segment at 266–286 (ATASIAVSFLAFGAFAVSALI) threads the bilayer. At 287–297 (SSYRLFTHASS) the chain is on the cytoplasmic side.

This sequence belongs to the Casparian strip membrane proteins (CASP) family. Homodimer and heterodimers.

The protein resides in the cell membrane. This chain is CASP-like protein 4A2, found in Arabidopsis thaliana (Mouse-ear cress).